Here is a 351-residue protein sequence, read N- to C-terminus: Peroxisomal membrane protein PEX14 (351 aa).

The disordered stretch occupies residues 54–75 (KARTGTVQASPSQQSVVPPRPP). Residues 60 to 70 (VQASPSQQSVV) show a composition bias toward low complexity. The SH3-binding signature appears at 83–91 (APPLPERDW). The interval 243–351 (APQLSTPPSE…RGIPAWQLNA (109 aa)) is disordered. A compositionally biased stretch (polar residues) spans 245–258 (QLSTPPSESTSRQS). A compositionally biased stretch (basic and acidic residues) spans 283 to 293 (VLSREKDKDVN). The segment covering 294 to 303 (SDSIAQYEQR) has biased composition (polar residues). Residues 320–334 (SASNGGSSTTSGVAG) are compositionally biased toward low complexity.

The protein belongs to the peroxin-14 family. In terms of assembly, interacts with PEX13 (via SH3 domain); forming the PEX13-PEX14 docking complex. Interacts with PEX5 (via WxxxF/Y motifs).

The protein resides in the peroxisome membrane. Component of the PEX13-PEX14 docking complex, a translocon channel that specifically mediates the import of peroxisomal cargo proteins bound to PEX5 receptor. The PEX13-PEX14 docking complex forms a large import pore which can be opened to a diameter of about 9 nm. Mechanistically, PEX5 receptor along with cargo proteins associates with the PEX14 subunit of the PEX13-PEX14 docking complex in the cytosol, leading to the insertion of the receptor into the organelle membrane with the concomitant translocation of the cargo into the peroxisome matrix. The chain is Peroxisomal membrane protein PEX14 from Pichia angusta (Yeast).